A 258-amino-acid polypeptide reads, in one-letter code: Ribosomal RNA large subunit methyltransferase E (258 aa).

S-adenosyl-L-methionine-binding residues include Gly58, Trp60, Asp78, Asp96, and Asp120. Catalysis depends on Lys160, which acts as the Proton acceptor.

The protein belongs to the class I-like SAM-binding methyltransferase superfamily. RNA methyltransferase RlmE family.

It is found in the cytoplasm. The enzyme catalyses uridine(2552) in 23S rRNA + S-adenosyl-L-methionine = 2'-O-methyluridine(2552) in 23S rRNA + S-adenosyl-L-homocysteine + H(+). Specifically methylates the uridine in position 2552 of 23S rRNA at the 2'-O position of the ribose in the fully assembled 50S ribosomal subunit. The sequence is that of Ribosomal RNA large subunit methyltransferase E from Methanococcus maripaludis (strain C7 / ATCC BAA-1331).